The primary structure comprises 658 residues: Structure-specific endonuclease subunit SLX4 (658 aa).

Disordered regions lie at residues 17 to 37 (VDSD…IPGD), 74 to 123 (GATE…KSIT), and 327 to 383 (QPGV…QVLQ). Low complexity-rich tracts occupy residues 75 to 90 (ATES…PPAK) and 99 to 108 (KAAGRTSTGT). Residues 365-374 (FPKSPTSTPE) show a composition bias toward polar residues.

This sequence belongs to the SLX4 family. As to quaternary structure, forms a heterodimer with SLX1. In terms of processing, phosphorylated in response to DNA damage.

The protein localises to the nucleus. In terms of biological role, regulatory subunit of the SLX1-SLX4 structure-specific endonuclease that resolves DNA secondary structures generated during DNA repair and recombination. Has endonuclease activity towards branched DNA substrates, introducing single-strand cuts in duplex DNA close to junctions with ss-DNA. The polypeptide is Structure-specific endonuclease subunit SLX4 (Lachancea thermotolerans (strain ATCC 56472 / CBS 6340 / NRRL Y-8284) (Yeast)).